The primary structure comprises 256 residues: Ras-related protein Rab-26 (256 aa).

The interval 1–53 (MSRKKTPKSKAGSAPATSALPAANGPRPVRPGTARPGPEAPPNGPPQPGRSSV) is disordered. A compositionally biased stretch (pro residues) spans 38–48 (PEAPPNGPPQP). Residues serine 72, glycine 73, valine 74, glycine 75, lysine 76, threonine 77, cysteine 78, serine 95, and threonine 96 each contribute to the GTP site. A Mg(2+)-binding site is contributed by threonine 77. 2 consecutive short sequence motifs (switch) follow at residues 86–101 (GAFL…GIDF) and 119–136 (DTAG…YYRD). Mg(2+)-binding residues include threonine 96 and aspartate 119. Residues glycine 122, asparagine 177, lysine 178, aspartate 180, alanine 208, and lysine 209 each contribute to the GTP site. S-geranylgeranyl cysteine attachment occurs at residues cysteine 253 and cysteine 254.

The protein belongs to the small GTPase superfamily. Rab family. Requires Mg(2+) as cofactor.

The protein resides in the cell membrane. The catalysed reaction is GTP + H2O = GDP + phosphate + H(+). Its activity is regulated as follows. Regulated by guanine nucleotide exchange factors (GEFs) which promote the exchange of bound GDP for free GTP. Regulated by GTPase activating proteins (GAPs) which increase the GTP hydrolysis activity. Inhibited by GDP dissociation inhibitors (GDIs). Its function is as follows. The small GTPases Rab are key regulators of intracellular membrane trafficking, from the formation of transport vesicles to their fusion with membranes. Rabs cycle between an inactive GDP-bound form and an active GTP-bound form that is able to recruit to membranes different set of downstream effectors directly responsible for vesicle formation, movement, tethering and fusion. RAB26 mediates transport of ADRA2A and ADRA2B from the Golgi to the cell membrane. Plays a role in the maturation of zymogenic granules and in pepsinogen secretion in the stomach. Plays a role in the secretion of amylase from acinar granules in the parotid gland. This chain is Ras-related protein Rab-26 (RAB26), found in Bos taurus (Bovine).